The chain runs to 483 residues: Ero1-like protein (483 aa).

Residues 1–29 (MTTRTVQRNLWASAAVVLVLLLLWTDTTG) form the signal peptide. Intrachain disulfides connect Cys-44–Cys-57, Cys-46–Cys-55, Cys-94–Cys-402, Cys-103–Cys-108, Cys-227–Cys-251, and Cys-405–Cys-408. FAD-binding residues include Arg-206, Thr-208, and Trp-219. N-linked (GlcNAc...) asparagine glycosylation is present at Asn-232. FAD is bound by residues Ser-262, His-265, and Arg-301. N-linked (GlcNAc...) asparagine glycosylation is present at Asn-395.

It belongs to the EROs family. As to quaternary structure, may function both as a monomer and a homodimer. The cofactor is FAD.

It is found in the endoplasmic reticulum membrane. In terms of biological role, oxidoreductase involved in disulfide bond formation in the endoplasmic reticulum. Efficiently reoxidizes pdi-1, the enzyme catalyzing protein disulfide formation, in order to allow pdi-1 to sustain additional rounds of disulfide formation. Following pdi reoxidation, passes its electrons to molecular oxygen via FAD, leading to the production of reactive oxygen species (ROS) in the cell. The sequence is that of Ero1-like protein (Ero1L) from Drosophila melanogaster (Fruit fly).